Reading from the N-terminus, the 68-residue chain is Cell division protein ZapB (68 aa).

Residues 3-58 (LELLSKLETKIQAALETIELLKMELEEEKQKNHTLNEQNQQLSQDLTSWNEKVTGL) adopt a coiled-coil conformation.

It belongs to the ZapB family. In terms of assembly, homodimer. The ends of the coiled-coil dimer bind to each other, forming polymers. Interacts with FtsZ.

The protein localises to the cytoplasm. Non-essential, abundant cell division factor that is required for proper Z-ring formation. It is recruited early to the divisome by direct interaction with FtsZ, stimulating Z-ring assembly and thereby promoting cell division earlier in the cell cycle. Its recruitment to the Z-ring requires functional FtsA or ZipA. The chain is Cell division protein ZapB from Shewanella loihica (strain ATCC BAA-1088 / PV-4).